The following is a 436-amino-acid chain: GTPase Der (436 aa).

EngA-type G domains are found at residues 4-165 (NVIA…NFDS) and 172-347 (FKLS…ENLE). Residues 10 to 17 (GKPNVGKS), 57 to 61 (DTGGI), 119 to 122 (NKLD), 178 to 185 (GQPNSGKS), 225 to 229 (DTAGI), and 290 to 293 (NKWD) each bind GTP. In terms of domain architecture, KH-like spans 348-432 (REIKPSVLTN…PINIIFKNKS (85 aa)).

Belongs to the TRAFAC class TrmE-Era-EngA-EngB-Septin-like GTPase superfamily. EngA (Der) GTPase family. As to quaternary structure, associates with the 50S ribosomal subunit.

Functionally, GTPase that plays an essential role in the late steps of ribosome biogenesis. This chain is GTPase Der, found in Mycoplasmopsis agalactiae (strain NCTC 10123 / CIP 59.7 / PG2) (Mycoplasma agalactiae).